The primary structure comprises 103 residues: V-type sodium ATPase subunit G (103 aa).

Belongs to the V-ATPase F subunit family.

In terms of biological role, involved in ATP-driven sodium extrusion. The polypeptide is V-type sodium ATPase subunit G (ntpG) (Enterococcus hirae (strain ATCC 9790 / DSM 20160 / JCM 8729 / LMG 6399 / NBRC 3181 / NCIMB 6459 / NCDO 1258 / NCTC 12367 / WDCM 00089 / R)).